Here is a 512-residue protein sequence, read N- to C-terminus: Respiratory nitrate reductase 1 beta chain (512 aa).

3 consecutive 4Fe-4S ferredoxin-type domains span residues 7-35 (VGMVLNLDKCIGCHTCSVTCKNVWTSREG), 175-206 (TFMMYLPRLCEHCLNPACVATCPSGAIYKREE), and 208-237 (GIVLIDQDKCRGWRMCITGCPYKKIYFNWK). [4Fe-4S] cluster-binding residues include C16, C19, C22, C26, C184, C187, and C192. [3Fe-4S] cluster is bound by residues C196, C217, and C223. 5 residues coordinate [4Fe-4S] cluster: C227, C244, C247, C259, and C263.

In terms of assembly, dimer of heterotrimers each composed of an alpha, a beta and a gamma chain. Alpha and beta are catalytic chains; gamma chains are involved in binding the enzyme complex to the cytoplasmic membrane. It depends on [4Fe-4S] cluster as a cofactor. The cofactor is [3Fe-4S] cluster.

The protein localises to the cell membrane. The enzyme catalyses nitrate + a quinol = a quinone + nitrite + H2O. The nitrate reductase enzyme complex allows S.flexneri to use nitrate as an electron acceptor during anaerobic growth. The beta chain is an electron transfer unit containing four cysteine clusters involved in the formation of iron-sulfur centers. Electrons are transferred from the gamma chain to the molybdenum cofactor of the alpha subunit. In Shigella flexneri, this protein is Respiratory nitrate reductase 1 beta chain (narH).